The sequence spans 49 residues: Large ribosomal subunit protein eL40 (49 aa).

Belongs to the eukaryotic ribosomal protein eL40 family.

The polypeptide is Large ribosomal subunit protein eL40 (Haloquadratum walsbyi (strain DSM 16790 / HBSQ001)).